The sequence spans 292 residues: 4-hydroxy-tetrahydrodipicolinate synthase (292 aa).

Residue T44 participates in pyruvate binding. Y132 functions as the Proton donor/acceptor in the catalytic mechanism. K161 functions as the Schiff-base intermediate with substrate in the catalytic mechanism. Pyruvate is bound at residue I203.

This sequence belongs to the DapA family. Homotetramer.

The protein localises to the cytoplasm. The enzyme catalyses L-aspartate 4-semialdehyde + pyruvate = (2S,4S)-4-hydroxy-2,3,4,5-tetrahydrodipicolinate + H2O + H(+). It functions in the pathway amino-acid biosynthesis; L-lysine biosynthesis via DAP pathway; (S)-tetrahydrodipicolinate from L-aspartate: step 3/4. Its activity is regulated as follows. Is feedback inhibited by lysine. Is competitively inhibited by 2-oxobutyrate with respect to pyruvate. Its function is as follows. Catalyzes the condensation of (S)-aspartate-beta-semialdehyde [(S)-ASA] and pyruvate to 4-hydroxy-tetrahydrodipicolinate (HTPA). In Rhizobium meliloti (Ensifer meliloti), this protein is 4-hydroxy-tetrahydrodipicolinate synthase.